The chain runs to 374 residues: Aminomethyltransferase (374 aa).

Belongs to the GcvT family. The glycine cleavage system is composed of four proteins: P, T, L and H.

The enzyme catalyses N(6)-[(R)-S(8)-aminomethyldihydrolipoyl]-L-lysyl-[protein] + (6S)-5,6,7,8-tetrahydrofolate = N(6)-[(R)-dihydrolipoyl]-L-lysyl-[protein] + (6R)-5,10-methylene-5,6,7,8-tetrahydrofolate + NH4(+). The glycine cleavage system catalyzes the degradation of glycine. This is Aminomethyltransferase from Caldanaerobacter subterraneus subsp. tengcongensis (strain DSM 15242 / JCM 11007 / NBRC 100824 / MB4) (Thermoanaerobacter tengcongensis).